Reading from the N-terminus, the 134-residue chain is Small ribosomal subunit protein bS6 (134 aa).

Residues 100 to 134 (SFLARDETDRRERSEETAEGEGEPDHSANEAVVTA) form a disordered region. Over residues 103–115 (ARDETDRRERSEE) the composition is skewed to basic and acidic residues.

This sequence belongs to the bacterial ribosomal protein bS6 family.

Binds together with bS18 to 16S ribosomal RNA. The chain is Small ribosomal subunit protein bS6 from Acidithiobacillus ferrooxidans (strain ATCC 23270 / DSM 14882 / CIP 104768 / NCIMB 8455) (Ferrobacillus ferrooxidans (strain ATCC 23270)).